The sequence spans 269 residues: 3'(2'),5'-bisphosphate nucleotidase CysQ (269 aa).

Mg(2+) contacts are provided by glutamate 69, aspartate 89, leucine 91, aspartate 92, and aspartate 216. Glutamate 69 contacts substrate. Residues 91–94 (LDGT) and aspartate 216 contribute to the substrate site.

Belongs to the inositol monophosphatase superfamily. CysQ family. It depends on Mg(2+) as a cofactor.

The protein localises to the cell inner membrane. It carries out the reaction adenosine 3',5'-bisphosphate + H2O = AMP + phosphate. Its function is as follows. Converts adenosine-3',5'-bisphosphate (PAP) to AMP. The protein is 3'(2'),5'-bisphosphate nucleotidase CysQ of Aggregatibacter actinomycetemcomitans (Actinobacillus actinomycetemcomitans).